A 445-amino-acid chain; its full sequence is Adenylosuccinate synthetase (445 aa).

GTP contacts are provided by residues 12 to 18 (GDEGKGK) and 40 to 42 (GHT). Asp-13 acts as the Proton acceptor in catalysis. The Mg(2+) site is built by Asp-13 and Gly-40. IMP is bound by residues 13–16 (DEGK), 38–41 (NAGH), Thr-128, Arg-142, Gln-223, Thr-238, and Arg-302. Catalysis depends on His-41, which acts as the Proton donor. 298-304 (TTTGRKR) is a binding site for substrate. GTP contacts are provided by residues Arg-304, 330–332 (KLD), and 411–413 (SLG).

This sequence belongs to the adenylosuccinate synthetase family. Homodimer. The cofactor is Mg(2+).

The protein localises to the cytoplasm. It carries out the reaction IMP + L-aspartate + GTP = N(6)-(1,2-dicarboxyethyl)-AMP + GDP + phosphate + 2 H(+). It functions in the pathway purine metabolism; AMP biosynthesis via de novo pathway; AMP from IMP: step 1/2. Functionally, plays an important role in the de novo pathway of purine nucleotide biosynthesis. Catalyzes the first committed step in the biosynthesis of AMP from IMP. The chain is Adenylosuccinate synthetase from Cyanothece sp. (strain PCC 7425 / ATCC 29141).